The chain runs to 208 residues: uncharacterized protein (208 aa).

2 disordered regions span residues 1–78 (MDLF…SPTE) and 154–208 (RRRS…PRNY). Residues 40–51 (KNHKKAQPRRTT) show a composition bias toward basic residues. The segment covering 179 to 197 (ANSSSPNPTATGSETSYGS) has biased composition (polar residues).

This is an uncharacterized protein from Caenorhabditis elegans.